We begin with the raw amino-acid sequence, 404 residues long: MESWPWPSGGAWLLVPARALLQLLRADLRLGRPLLAALALLAALDWLCQRLLPPLAALAVLAATGWIVLSRLARPQRLPVATRAVLITGCDSGFGNATAKKLDTMGFTVLATVLDLNSPGALELRACCSSRLKLLQMDLTKPGDISRVLEFTKVHTPSTGLWGLVNNAGQNIFVADAELCPVATFRTCMEVNFFGALEMTKGLLPLLRRSSGRIVTVSSPAGDMPFPCLAAYGTSKAALALLMGNFSCELLPWGVKVSIIQPACFKTESVKDVHQWEERKQQLLATLPQELLQAYGEDYIEHLNGQFLHSLSQALPDLSPVVDAITDALLAAQPLRRYYPGHGLGLIYFIHYYLPEGLRQRFLQSFFISPYVPRALQAGQPGLTSARDIAQDQGPRPDPSPTAQ.

An NAD(+)-binding site is contributed by 82 to 111 (TRAVLITGCDSGFGNATAKKLDTMGFTVLA). Position 219 (S219) interacts with substrate. Y232 serves as the catalytic Proton acceptor. The segment at 383 to 404 (LTSARDIAQDQGPRPDPSPTAQ) is disordered.

The protein belongs to the short-chain dehydrogenases/reductases (SDR) family. In terms of assembly, interacts with ligand-free cytoplasmic NR3C2. In terms of tissue distribution, highly expressed in kidney, adrenal and colon; detected at lower levels on lung, liver, and spleen. Expressed in oocytes. Expressed in uterine tissues and in corpora lutea.

The protein localises to the microsome. The protein resides in the endoplasmic reticulum. The catalysed reaction is an 11beta-hydroxysteroid + NAD(+) = an 11-oxosteroid + NADH + H(+). The enzyme catalyses corticosterone + NAD(+) = 11-dehydrocorticosterone + NADH + H(+). It carries out the reaction cortisol + NAD(+) = cortisone + NADH + H(+). It catalyses the reaction 11beta,17beta-dihydroxyandrost-4-ene-3-one + NAD(+) = 17beta-hydroxyandrost-4-ene-3,11-dione + NADH + H(+). The catalysed reaction is 11beta-hydroxyandrost-4-ene-3,17-dione + NAD(+) = androst-4-ene-3,11,17-trione + NADH + H(+). Its pathway is steroid metabolism. Its activity is regulated as follows. Inhibited by glycyrrhetinic acid, carbenoloxone, 11-alpha-OH-progesterone and 11-beta-OH-progesterone. Functionally, catalyzes the conversion of biologically active 11beta-hydroxyglucocorticoids (11beta-hydroxysteroid) such as cortisol, to inactive 11-ketoglucocorticoids (11-oxosteroid) such as cortisone, in the presence of NAD(+). Functions as a dehydrogenase (oxidase), thereby decreasing the concentration of active glucocorticoids, thus protecting the nonselective mineralocorticoid receptor from occupation by glucocorticoids. Affinity towards corticosterone is higher than cortisol or dexamethasone. Plays an important role in maintaining glucocorticoids balance during preimplantation and protects the fetus from excessive maternal corticosterone exposure. Catalyzes the oxidation of 11beta-hydroxytestosterone (11beta,17beta-dihydroxyandrost-4-ene-3-one) to 11-ketotestosterone (17beta-hydroxyandrost-4-ene-3,11-dione), a major bioactive androgen. Catalyzes the conversion of 11beta-hydroxyandrostenedione (11beta-hydroxyandrost-4-ene-3,17-dione) to 11-ketoandrostenedione (androst-4-ene-3,11,17-trione), which can be further metabolized to 11-ketotestosterone. Converts 7-beta-25-dihydroxycholesterol to 7-oxo-25-hydroxycholesterol in vitro. 7-beta-25-dihydroxycholesterol (not 7-oxo-25-hydroxycholesterol) acts as ligand for the G-protein-coupled receptor (GPCR) Epstein-Barr virus-induced gene 2 (EBI2) and may thereby regulate immune cell migration. May protect ovulating oocytes and fertilizing spermatozoa from the adverse effects of cortisol. The protein is 11-beta-hydroxysteroid dehydrogenase type 2 (HSD11B2) of Bos taurus (Bovine).